A 637-amino-acid polypeptide reads, in one-letter code: Biosynthetic arginine decarboxylase (637 aa).

Lysine 101 is modified (N6-(pyridoxal phosphate)lysine). A substrate-binding site is contributed by 286-296 (FDVGGGLAVDY).

It belongs to the Orn/Lys/Arg decarboxylase class-II family. SpeA subfamily. Mg(2+) is required as a cofactor. The cofactor is pyridoxal 5'-phosphate.

The enzyme catalyses L-arginine + H(+) = agmatine + CO2. It participates in amine and polyamine biosynthesis; agmatine biosynthesis; agmatine from L-arginine: step 1/1. Catalyzes the biosynthesis of agmatine from arginine. In Shewanella halifaxensis (strain HAW-EB4), this protein is Biosynthetic arginine decarboxylase.